The following is a 570-amino-acid chain: Formate--tetrahydrofolate ligase (570 aa).

Residue 65 to 72 (TPHGEGKT) coordinates ATP.

The protein belongs to the formate--tetrahydrofolate ligase family.

The catalysed reaction is (6S)-5,6,7,8-tetrahydrofolate + formate + ATP = (6R)-10-formyltetrahydrofolate + ADP + phosphate. It participates in one-carbon metabolism; tetrahydrofolate interconversion. The polypeptide is Formate--tetrahydrofolate ligase (Shewanella putrefaciens (strain CN-32 / ATCC BAA-453)).